Reading from the N-terminus, the 80-residue chain is 17 kDa surface antigen (80 aa).

Residues 47 to 58 (ALETTPSGTSIE) are compositionally biased toward polar residues. The segment at 47–80 (ALETTPSGTSIEWRNPDNGNYGYVTPSKTYKNST) is disordered.

It belongs to the rickettsiale 17 kDa surface antigen family.

It is found in the cell outer membrane. The polypeptide is 17 kDa surface antigen (omp) (Rickettsia canadensis).